Here is a 232-residue protein sequence, read N- to C-terminus: MVKFKAIRGVAFDLDGTLVDSAPGLARAIDMALAHQGLPAAGEALVSTWIGNGADVLVERALHWAGREHNAQLVAQTRELFDHYYAKTVEQGSQLFPQVKATLAQLAANGLPIGLITNKPTPFVAPLLTSLGIADYFSVIIGGDDVVVKKPHPAPLYLLLGKLGLHAREMLFVGDSRNDIMAAQAAGCPCIGLTYGYNYGEAIATSHPDCVLAHFADLLPAIGLPSLKDQEV.

The Nucleophile role is filled by D13. Positions 13, 15, and 175 each coordinate Mg(2+).

It belongs to the HAD-like hydrolase superfamily. CbbY/CbbZ/Gph/YieH family. As to quaternary structure, monomer. Mg(2+) serves as cofactor. It depends on chloride as a cofactor.

The enzyme catalyses 2-phosphoglycolate + H2O = glycolate + phosphate. It participates in organic acid metabolism; glycolate biosynthesis; glycolate from 2-phosphoglycolate: step 1/1. Its function is as follows. Specifically catalyzes the dephosphorylation of 2-phosphoglycolate. Is involved in the dissimilation of the intracellular 2-phosphoglycolate formed during the DNA repair of 3'-phosphoglycolate ends, a major class of DNA lesions induced by oxidative stress. The polypeptide is Phosphoglycolate phosphatase (Yersinia pseudotuberculosis serotype I (strain IP32953)).